We begin with the raw amino-acid sequence, 264 residues long: Small ribosomal subunit protein mS23 (264 aa).

The interval 233–264 (ARTSNPAGSWKDDTTLNTAQEEESTTSENLHF) is disordered.

It belongs to the mitochondrion-specific ribosomal protein mS23 family. In terms of assembly, component of the mitochondrial small ribosomal subunit. Mature mitochondrial ribosomes consist of a small (37S) and a large (54S) subunit. The 37S subunit contains at least 33 different proteins and 1 molecule of RNA (15S). The 54S subunit contains at least 45 different proteins and 1 molecule of RNA (21S).

The protein localises to the mitochondrion. This chain is Small ribosomal subunit protein mS23 (RSM25), found in Saccharomyces cerevisiae (strain YJM789) (Baker's yeast).